A 194-amino-acid polypeptide reads, in one-letter code: uncharacterized protein (194 aa).

This is an uncharacterized protein from Escherichia coli (strain K12).